We begin with the raw amino-acid sequence, 467 residues long: Cysteine--tRNA ligase (467 aa).

Position 29 (cysteine 29) interacts with Zn(2+). A 'HIGH' region motif is present at residues 31-41; that stretch reads ATVQGEPHIGH. Zn(2+) contacts are provided by cysteine 207, histidine 232, and glutamate 236. Residues 263–267 carry the 'KMSKS' region motif; it reads KMSKS. Lysine 266 is an ATP binding site. The interval 446-467 is disordered; the sequence is IDVTDTPNGPEWSLRTARGKAN.

It belongs to the class-I aminoacyl-tRNA synthetase family. In terms of assembly, monomer. The cofactor is Zn(2+).

It localises to the cytoplasm. The enzyme catalyses tRNA(Cys) + L-cysteine + ATP = L-cysteinyl-tRNA(Cys) + AMP + diphosphate. This Nocardia farcinica (strain IFM 10152) protein is Cysteine--tRNA ligase.